The primary structure comprises 383 residues: MGCFGSAGSKQSDSNSSEDTKSQKRRSDAITRQLQKDKQVYRATHRLLLLGAGESGKSTIVKQMRILHVNGFSDSERKQKIEDIKKNIRDAILTITGAMSTLTPPIQLEKPENQARVDYIQDYASGPDFNYPPEFYEHTEELWKDRGVQQTYERSNEYQLIDCAKYFLDRVSEIKQPNYTPTEQDILRCRVLTSGIFETRFQVDKVNFHMFDVGGQRDERRKWIQCFNDVTAIIFVTACSSYNMVLREDPTQNRLRESLDLFKSIWNNRWLRTISVILFLNKQDLLAEKIKAGKSKLSDYFGEFNRYQTPADAVCEMGEDPEVIRAKYFIRDEFLRISTASGDGKHYCYPHFTCAVDTENIKRVFNDCRDIIQRMHLRQYELL.

The interval 1-31 is disordered; the sequence is MGCFGSAGSKQSDSNSSEDTKSQKRRSDAIT. Gly-2 is lipidated: N-palmitoyl glycine. Residue Cys-3 is the site of S-palmitoyl cysteine attachment. Positions 8 to 17 are enriched in polar residues; the sequence is GSKQSDSNSS. Residues 18-31 are compositionally biased toward basic and acidic residues; sequence EDTKSQKRRSDAIT. The G-alpha domain maps to 43–383; that stretch reads ATHRLLLLGA…RMHLRQYELL (341 aa). Positions 46–59 are G1 motif; the sequence is RLLLLGAGESGKST. Residues 51 to 58, 187 to 193, 212 to 216, 281 to 284, and Ala-355 each bind GTP; these read GAGESGKS, LRCRVLT, DVGGQ, and NKQD. Mg(2+)-binding residues include Ser-58 and Thr-193. The segment at 185 to 193 is G2 motif; the sequence is DILRCRVLT. The interval 208–217 is G3 motif; the sequence is FHMFDVGGQR. Residues 277-284 form a G4 motif region; that stretch reads ILFLNKQD. Residues 353 to 358 form a G5 motif region; the sequence is TCAVDT.

It belongs to the G-alpha family. G(s) subfamily. G proteins are composed of 3 units; alpha, beta and gamma. The alpha chain contains the guanine nucleotide binding site.

In terms of biological role, guanine nucleotide-binding proteins (G proteins) are involved as modulators or transducers in various transmembrane signaling systems. The G(s) protein is involved in hormonal regulation of adenylate cyclase: it activates the cyclase. Participates in olfactory signal transduction. The sequence is that of Guanine nucleotide-binding protein G(s) subunit alpha from Anopheles gambiae (African malaria mosquito).